We begin with the raw amino-acid sequence, 226 residues long: UPF0319 protein SO_1816 (226 aa).

The N-terminal stretch at 1-21 (MKSLLPISSLLVLLGSASVSA) is a signal peptide.

Belongs to the UPF0319 family.

In Shewanella oneidensis (strain ATCC 700550 / JCM 31522 / CIP 106686 / LMG 19005 / NCIMB 14063 / MR-1), this protein is UPF0319 protein SO_1816.